Consider the following 229-residue polypeptide: MDKKGWSLKGSLLPLLLLVSDLLLCQSVASLPICPTGAVNCQVSLRDLFDRAVILSHYIHNLSSEMFNEFDKRYAQGRGFITKAINSCHTSSLSTPEDKEQAQQIHHEDLLNLILRVLRSWNDPLYHLVTEVRGMQEAPDSILSRAIEIEEQNRRLLEGMEKIVGQVHPGVRENEVYSVWSGLPSLQMADEDTRLFAFYNLLHCLRRDSHKIDNYLKLLKCRIVYDSNC.

Positions 1–30 (MDKKGWSLKGSLLPLLLLVSDLLLCQSVAS) are cleaved as a signal peptide. A disulfide bond links Cys34 and Cys41. A phosphoserine mark is found at Ser56, Ser64, and Ser120. Intrachain disulfides connect Cys88–Cys204 and Cys221–Cys229.

This sequence belongs to the somatotropin/prolactin family. Interacts with PRLR.

It localises to the secreted. Functionally, prolactin acts primarily on the mammary gland by promoting lactation. In Ailuropoda melanoleuca (Giant panda), this protein is Prolactin (PRL).